The following is a 294-amino-acid chain: 33 kDa chaperonin (294 aa).

Intrachain disulfides connect Cys-236/Cys-238 and Cys-269/Cys-272.

Belongs to the HSP33 family. In terms of processing, under oxidizing conditions two disulfide bonds are formed involving the reactive cysteines. Under reducing conditions zinc is bound to the reactive cysteines and the protein is inactive.

The protein localises to the cytoplasm. Functionally, redox regulated molecular chaperone. Protects both thermally unfolding and oxidatively damaged proteins from irreversible aggregation. Plays an important role in the bacterial defense system toward oxidative stress. This chain is 33 kDa chaperonin, found in Desulfotalea psychrophila (strain LSv54 / DSM 12343).